Here is a 217-residue protein sequence, read N- to C-terminus: Probable GTP-binding protein EngB (217 aa).

The region spanning 44-217 (DRIEVCFAGR…TLRTIVATLG (174 aa)) is the EngB-type G domain. GTP contacts are provided by residues 52–59 (GRSNVGKS), 79–83 (GRTQE), 97–100 (DLPG), 164–167 (TKAD), and 198–200 (TSS). Mg(2+) is bound by residues Ser59 and Thr81.

Belongs to the TRAFAC class TrmE-Era-EngA-EngB-Septin-like GTPase superfamily. EngB GTPase family. It depends on Mg(2+) as a cofactor.

Functionally, necessary for normal cell division and for the maintenance of normal septation. The sequence is that of Probable GTP-binding protein EngB from Cereibacter sphaeroides (strain ATCC 17023 / DSM 158 / JCM 6121 / CCUG 31486 / LMG 2827 / NBRC 12203 / NCIMB 8253 / ATH 2.4.1.) (Rhodobacter sphaeroides).